The primary structure comprises 149 residues: uncharacterized protein (149 aa).

A helical membrane pass occupies residues 124–144 (IIIIALIIILANYAPSIIGKI).

The protein belongs to the M.jannaschii MJ0023/MJ0349/MJ1072/MJ1074/MJ1107/MJECL16 family.

It localises to the membrane. This is an uncharacterized protein from Methanocaldococcus jannaschii (strain ATCC 43067 / DSM 2661 / JAL-1 / JCM 10045 / NBRC 100440) (Methanococcus jannaschii).